A 361-amino-acid polypeptide reads, in one-letter code: Peptide chain release factor 1 (361 aa).

Residue Gln237 is modified to N5-methylglutamine. Residues 287–297 (KQQKEQSDTRK) are compositionally biased toward basic and acidic residues. The segment at 287–313 (KQQKEQSDTRKSLVGSGDRSERIRTYN) is disordered.

This sequence belongs to the prokaryotic/mitochondrial release factor family. In terms of processing, methylated by PrmC. Methylation increases the termination efficiency of RF1.

Its subcellular location is the cytoplasm. Functionally, peptide chain release factor 1 directs the termination of translation in response to the peptide chain termination codons UAG and UAA. The sequence is that of Peptide chain release factor 1 from Francisella tularensis subsp. tularensis (strain FSC 198).